The sequence spans 712 residues: T-box transcription factor TBX2 (712 aa).

The segment at residues 109–287 is a DNA-binding region (T-box); sequence LEAKELWDQF…NNPFAKGFRD (179 aa). The disordered stretch occupies residues 313–450; the sequence is PERDGAESDA…EGKEQGLAPL (138 aa). The span at 326–336 shows a compositional bias: pro residues; sequence DPPPAREPPTS. Phosphoserine occurs at positions 336, 342, and 360. Basic and acidic residues-rich tracts occupy residues 363–372, 391–409, and 421–444; these read EPERLSEERA, TEPE…KEPA, and SLEK…EGKE. Residues 518 to 601 form a repression domain 1 (RD1) region; the sequence is GGNGGGGGPG…ATSAAAAAAA (84 aa). Residues Ser622, Ser653, Ser657, and Ser676 each carry the phosphoserine modification. A disordered region spans residues 637 to 687; that stretch reads LTTGLASEGSKAAGGNSREPSPLPELALRKVGAPSRGALSPSGSAKEAANE.

Binds DNA as a monomer. Interacts with PML (isoform PML-2, isoform PML-3 and isoform PML-4). As to expression, expressed primarily in adult in kidney, lung, and placenta. Weak expression in heart and ovary.

It localises to the nucleus. Functionally, transcription factor which acts as a transcriptional repressor. May also function as a transcriptional activator. Binds to the palindromic T site 5'-TTCACACCTAGGTGTGAA-3' DNA sequence, or a half-site, which are present in the regulatory region of several genes. Required for cardiac atrioventricular canal formation. May cooperate with NKX2.5 to negatively modulate expression of NPPA/ANF in the atrioventricular canal. May play a role as a positive regulator of TGFB2 expression, perhaps acting in concert with GATA4 in the developing outflow tract myocardium. Plays a role in limb pattern formation. Acts as a transcriptional repressor of ADAM10 gene expression, perhaps in concert with histone deacetylase HDAC1 as cofactor. Involved in branching morphogenesis in both developing lungs and adult mammary glands, via negative modulation of target genes; acting redundantly with TBX3. Required, together with TBX3, to maintain cell proliferation in the embryonic lung mesenchyme; perhaps acting downstream of SHH, BMP and TGFbeta signaling. Involved in modulating early inner ear development, acting independently of, and also redundantly with TBX3, in different subregions of the developing ear. Acts as a negative regulator of PML function in cellular senescence. Acts as a negative regulator of expression of CDKN1A/p21, IL33 and CCN4; repression of CDKN1A is enhanced in response to UV-induced stress, perhaps as a result of phosphorylation by p38 MAPK. Negatively modulates expression of CDKN2A/p14ARF and CDH1/E-cadherin. Plays a role in induction of the epithelial-mesenchymal transition (EMT). Plays a role in melanocyte proliferation, perhaps via regulation of cyclin CCND1. Involved in melanogenesis, acting via negative modulation of expression of DHICA oxidase/TYRP1 and P protein/OCA2. Involved in regulating retinal pigment epithelium (RPE) cell proliferation, perhaps via negatively modulating transcription of the transcription factor CEBPD. The chain is T-box transcription factor TBX2 (TBX2) from Homo sapiens (Human).